Here is a 974-residue protein sequence, read N- to C-terminus: Glycine dehydrogenase (decarboxylating) (974 aa).

K720 carries the post-translational modification N6-(pyridoxal phosphate)lysine.

It belongs to the GcvP family. In terms of assembly, the glycine cleavage system is composed of four proteins: P, T, L and H. It depends on pyridoxal 5'-phosphate as a cofactor.

The enzyme catalyses N(6)-[(R)-lipoyl]-L-lysyl-[glycine-cleavage complex H protein] + glycine + H(+) = N(6)-[(R)-S(8)-aminomethyldihydrolipoyl]-L-lysyl-[glycine-cleavage complex H protein] + CO2. The glycine cleavage system catalyzes the degradation of glycine. The P protein binds the alpha-amino group of glycine through its pyridoxal phosphate cofactor; CO(2) is released and the remaining methylamine moiety is then transferred to the lipoamide cofactor of the H protein. This Cupriavidus metallidurans (strain ATCC 43123 / DSM 2839 / NBRC 102507 / CH34) (Ralstonia metallidurans) protein is Glycine dehydrogenase (decarboxylating).